Reading from the N-terminus, the 236-residue chain is 2-C-methyl-D-erythritol 4-phosphate cytidylyltransferase (236 aa).

This sequence belongs to the IspD/TarI cytidylyltransferase family. IspD subfamily.

It catalyses the reaction 2-C-methyl-D-erythritol 4-phosphate + CTP + H(+) = 4-CDP-2-C-methyl-D-erythritol + diphosphate. Its pathway is isoprenoid biosynthesis; isopentenyl diphosphate biosynthesis via DXP pathway; isopentenyl diphosphate from 1-deoxy-D-xylulose 5-phosphate: step 2/6. Catalyzes the formation of 4-diphosphocytidyl-2-C-methyl-D-erythritol from CTP and 2-C-methyl-D-erythritol 4-phosphate (MEP). In Symbiobacterium thermophilum (strain DSM 24528 / JCM 14929 / IAM 14863 / T), this protein is 2-C-methyl-D-erythritol 4-phosphate cytidylyltransferase.